The primary structure comprises 142 residues: Small heat shock protein IbpB (142 aa).

Residues 26–137 (AGEGQSFPPY…AAQRIAISER (112 aa)) form the sHSP domain.

It belongs to the small heat shock protein (HSP20) family. As to quaternary structure, homodimer. Forms homomultimers of about 100-150 subunits at optimal growth temperatures. Conformation changes to oligomers at high temperatures or high ionic concentrations. The decrease in size of the multimers is accompanied by an increase in chaperone activity.

The protein localises to the cytoplasm. Its function is as follows. Associates with aggregated proteins, together with IbpA, to stabilize and protect them from irreversible denaturation and extensive proteolysis during heat shock and oxidative stress. Aggregated proteins bound to the IbpAB complex are more efficiently refolded and reactivated by the ATP-dependent chaperone systems ClpB and DnaK/DnaJ/GrpE. Its activity is ATP-independent. The chain is Small heat shock protein IbpB from Shigella boydii serotype 18 (strain CDC 3083-94 / BS512).